The sequence spans 227 residues: MSASADHTFDIKSARLNLFSIRLRSTRLADITRDLDNRFSADSPFSRTPAMLDVSQVNPVELDYRGLVARFAQYGIHLVGVRPTPAGLEGALDDAGLLPLGGDEALDESRLEDEPQPQTLVIDKPVRAGQQVYARGGNLVVLATVSAGAEVIADGDIHIYGSLRGRALAGARGQRDARIFVRSMQAELLSIAGIWRTLEQDLPAALASRPLQVLLESDKIVMRALPD.

It belongs to the MinC family. In terms of assembly, interacts with MinD and FtsZ.

In terms of biological role, cell division inhibitor that blocks the formation of polar Z ring septums. Rapidly oscillates between the poles of the cell to destabilize FtsZ filaments that have formed before they mature into polar Z rings. Prevents FtsZ polymerization. In Laribacter hongkongensis (strain HLHK9), this protein is Probable septum site-determining protein MinC.